The sequence spans 483 residues: Krueppel-like factor 4 (483 aa).

The segment at 22–42 (TFASGPAGREKTLRPAGAPTN) is disordered. Residue lysine 32 forms a Glycyl lysine isopeptide (Lys-Gly) (interchain with G-Cter in ubiquitin) linkage. The 9aaTAD motif lies at 99 to 107 (DLLDLDFIL). Serine 251 is subject to Phosphoserine. Positions 294 to 395 (AGPQLSNGHR…KRGRRSWPRK (102 aa)) are disordered. Residues 338–356 (LPLPPGFHPHPGPNYPPFL) are compositionally biased toward pro residues. The residue at position 381 (glutamate 381) is a 5-glutamyl polyglutamate. The segment covering 386-395 (KRGRRSWPRK) has biased composition (basic residues). The segment at 386-483 (KRGRRSWPRK…HLALHMKRHF (98 aa)) is interaction with ZNF296. 3 C2H2-type zinc fingers span residues 400 to 424 (HTCD…LRTH), 430 to 454 (YHCD…YRKH), and 460 to 482 (FQCQ…MKRH). The segment at 443–474 (RSDELTRHYRKHTGHRPFQCQKCDRAFSRSDH) is interaction with target DNA.

It belongs to the krueppel C2H2-type zinc-finger protein family. In terms of assembly, interacts with MUC1 (via the C-terminal domain). Interacts with POU5F1/OCT4 and SOX2. Interacts with MEIS2 isoform MeisD and PBX1 isoform PBX1a. Interacts with ZNF296. Interacts with GLIS1. Interacts with BTRC; this interaction leads to KLF4 ubiquitination and subsequent degradation. Interacts with IPO7; the interaction facilitates nuclear translocation of KLF4 in dental papilla cells. In terms of processing, ubiquitinated. 'Lys-48'-linked ubiquitinated and targeted for proteasomal degradation by the SCF(BTRC) E3 ubiquitin-protein ligase complex, thereby negatively regulating cell pluripotency maintenance and embryogenesis. Post-translationally, polyglutamylated by TTLL1 and TTLL4 at Glu-381, which inhibits KLF4 binding with E3 ligase component BTRC, thereby impeding ubiquitination. Deglutamylated by CCP1 and CCP6; deglutamylation promotes KLF4 ubiquitination. KLF4 glutamylation state plays a critical role in the regulation of its function in cell reprogramming, pluripotency maintenance and embryogenesis. As to expression, highest expression in the colon. Lower levels in testis, lung and small intestine.

It localises to the nucleus. It is found in the cytoplasm. In terms of biological role, transcription factor; can act both as activator and as repressor. Binds the 5'-CACCC-3' core sequence. Binds to the promoter region of its own gene and can activate its own transcription. Regulates the expression of key transcription factors during embryonic development. Plays an important role in maintaining embryonic stem cells, and in preventing their differentiation. Required for establishing the barrier function of the skin and for postnatal maturation and maintenance of the ocular surface. Involved in the differentiation of epithelial cells and may also function in skeletal and kidney development. Contributes to the down-regulation of p53/TP53 transcription. The sequence is that of Krueppel-like factor 4 (Klf4) from Mus musculus (Mouse).